We begin with the raw amino-acid sequence, 496 residues long: Cytochrome P450 71D181 (496 aa).

A helical; Signal-anchor for type II membrane protein membrane pass occupies residues 1–21 (MDISILWVAIILVISSYFIFM). Residue C435 coordinates heme. The tract at residues 471–496 (MSETPGLSGPRKNPLIMVPTIHNPTS) is disordered.

This sequence belongs to the cytochrome P450 family. Heme serves as cofactor.

It is found in the membrane. It catalyses the reaction gamma-terpinene + 2 reduced [NADPH--hemoprotein reductase] + 2 O2 = carvacrol + 2 oxidized [NADPH--hemoprotein reductase] + 3 H2O + 2 H(+). The catalysed reaction is (4S)-limonene + reduced [NADPH--hemoprotein reductase] + O2 = (1S,5R)-carveol + oxidized [NADPH--hemoprotein reductase] + H2O + H(+). It carries out the reaction (4R)-limonene + reduced [NADPH--hemoprotein reductase] + O2 = (1R,5S)-carveol + oxidized [NADPH--hemoprotein reductase] + H2O + H(+). The enzyme catalyses alpha-terpinene + 2 reduced [NADPH--hemoprotein reductase] + 2 O2 = carvacrol + 2 oxidized [NADPH--hemoprotein reductase] + 3 H2O + 2 H(+). It participates in secondary metabolite biosynthesis; terpenoid biosynthesis. Functionally, involved in the biosynthesis of phenolic monoterpenes natural products thymol and carvacrol which have a broad range of biological activities acting as antimicrobial compounds, insecticides, antioxidants and pharmaceutical agents. Catalyzes the C2-hydroxylation of gamma-terpinene and alpha-terpinene to produce carvacrol. Also mediates the C6-hydroxylation of (4S)-limonene and (4R)-limonene to form carveol. This chain is Cytochrome P450 71D181, found in Thymus vulgaris (Thyme).